The primary structure comprises 523 residues: 11-oxo-beta-amyrin 30-oxidase (523 aa).

A helical membrane pass occupies residues 9-29; that stretch reads AIWVVLTVILAAIPIWVCHMV. Residue C471 coordinates heme.

It belongs to the cytochrome P450 family. It depends on heme as a cofactor. As to expression, expressed in roots, stolons and stems. Not detected in leaves.

It is found in the membrane. The catalysed reaction is 11-oxo-beta-amyrin + 3 reduced [NADPH--hemoprotein reductase] + 3 O2 = glycyrrhetinate + 3 oxidized [NADPH--hemoprotein reductase] + 4 H2O + 4 H(+). The enzyme catalyses 11-oxo-beta-amyrin + reduced [NADPH--hemoprotein reductase] + O2 = 30-hydroxy-11-oxo-beta-amyrin + oxidized [NADPH--hemoprotein reductase] + H2O + H(+). It carries out the reaction 30-hydroxy-11-oxo-beta-amyrin + reduced [NADPH--hemoprotein reductase] + O2 = glycyrrhetaldehyde + oxidized [NADPH--hemoprotein reductase] + 2 H2O + H(+). It catalyses the reaction glycyrrhetaldehyde + reduced [NADPH--hemoprotein reductase] + O2 = glycyrrhetinate + oxidized [NADPH--hemoprotein reductase] + H2O + 2 H(+). In terms of biological role, involved in the biosynthesis of Glycyrrhetinic acid (GA), a natural product which exhibits anti-inflammatory activity. Involved in the biosynthesis of the triterpenoid saponin glycyrrhizin. Catalyzes three sequential oxidation steps at C-30 of 11-oxo-beta-amyrin. Also able to catalyze C-30 monohydroxylation of beta-amyrin to produce 30-hydroxy-beta-amyrin. May be also responsible for the oxidation at positions C-22 and C-29 in addition to C-30. The sequence is that of 11-oxo-beta-amyrin 30-oxidase from Glycyrrhiza uralensis (Chinese licorice).